A 283-amino-acid chain; its full sequence is Shikimate dehydrogenase (NADP(+)) (283 aa).

Residues 19–21 (SLS) and Thr-66 contribute to the shikimate site. Residue Lys-70 is the Proton acceptor of the active site. Shikimate contacts are provided by Asn-91 and Asp-106. Residues 129–133 (GAGGA), 153–158 (NRTPEK), and Leu-224 contribute to the NADP(+) site. Tyr-226 provides a ligand contact to shikimate. An NADP(+)-binding site is contributed by Gly-247.

This sequence belongs to the shikimate dehydrogenase family. In terms of assembly, homodimer.

It carries out the reaction shikimate + NADP(+) = 3-dehydroshikimate + NADPH + H(+). It functions in the pathway metabolic intermediate biosynthesis; chorismate biosynthesis; chorismate from D-erythrose 4-phosphate and phosphoenolpyruvate: step 4/7. In terms of biological role, involved in the biosynthesis of the chorismate, which leads to the biosynthesis of aromatic amino acids. Catalyzes the reversible NADPH linked reduction of 3-dehydroshikimate (DHSA) to yield shikimate (SA). In Methanothermobacter thermautotrophicus (strain ATCC 29096 / DSM 1053 / JCM 10044 / NBRC 100330 / Delta H) (Methanobacterium thermoautotrophicum), this protein is Shikimate dehydrogenase (NADP(+)).